The primary structure comprises 117 residues: DNA-directed RNA polymerase subunit omega (117 aa).

The protein belongs to the RNA polymerase subunit omega family. In terms of assembly, the RNAP catalytic core consists of 2 alpha, 1 beta, 1 beta' and 1 omega subunit. When a sigma factor is associated with the core the holoenzyme is formed, which can initiate transcription.

It carries out the reaction RNA(n) + a ribonucleoside 5'-triphosphate = RNA(n+1) + diphosphate. In terms of biological role, promotes RNA polymerase assembly. Latches the N- and C-terminal regions of the beta' subunit thereby facilitating its interaction with the beta and alpha subunits. In Ruegeria sp. (strain TM1040) (Silicibacter sp.), this protein is DNA-directed RNA polymerase subunit omega.